We begin with the raw amino-acid sequence, 365 residues long: Patr class I histocompatibility antigen, A-2 alpha chain (365 aa).

The signal sequence occupies residues M1–A24. The tract at residues G25–D114 is alpha-1. At G25–I308 the chain is on the extracellular side. A glycan (N-linked (GlcNAc...) asparagine) is linked at N110. The segment at G115–T206 is alpha-2. Cystine bridges form between C125–C188 and C227–C283. The alpha-3 stretch occupies residues D207–W298. In terms of domain architecture, Ig-like C1-type spans P209–T295. The connecting peptide stretch occupies residues E299–I308. A helical transmembrane segment spans residues V309 to W332. Topologically, residues R333–V365 are cytoplasmic. Residues R339–L360 form a disordered region. The residue at position 343 (S343) is a Phosphoserine. Residue Y344 is modified to Phosphotyrosine. The segment covering Q346 to S359 has biased composition (low complexity). Phosphoserine occurs at positions 349, 350, 352, 356, and 359.

Belongs to the MHC class I family. Heterodimer of an alpha chain and a beta chain (beta-2-microglobulin).

It is found in the membrane. Involved in the presentation of foreign antigens to the immune system. The protein is Patr class I histocompatibility antigen, A-2 alpha chain of Pan troglodytes (Chimpanzee).